Reading from the N-terminus, the 562-residue chain is RNA N(6)-adenosine-methyltransferase METTL16 (562 aa).

Residues 17 to 20 (PPDF) are RNA-binding. The S-adenosyl-L-methionine site is built by Arg82, Gly110, Ser114, Glu133, Thr164, and Asn184. Residues 163–167 (KTLLM) form a K-loop region. 3 RNA-binding regions span residues 199 to 211 (SRNPRRPPPSSVN), 250 to 254 (GKKCS), and 277 to 283 (QGRTMRW). Positions 289–400 (FYDDVTVPSP…QLREVPRAPE (112 aa)) are VCR 1. Ser329 carries the phosphoserine modification. Positions 402 to 413 (VIQALEEKKPTP) are enriched in basic and acidic residues. The disordered stretch occupies residues 402 to 498 (VIQALEEKKP…DQEASEQFGS (97 aa)). Over residues 458–467 (ENPEPTEDER) the composition is skewed to acidic residues. Phosphothreonine is present on Thr463. Residues 480–496 (CQGSSNGAQDQEASEQF) are compositionally biased toward polar residues. Positions 514-562 (YLFKCLINVKKEVDDALVEMHWVEGQNRDLMNQLCTYIRNQIFRLVAVN) are VCR 2.

This sequence belongs to the methyltransferase superfamily. METTL16/RlmF family. Interacts with MEPCE. Interacts with LARP7.

Its subcellular location is the nucleus. It is found in the cytoplasm. The catalysed reaction is adenosine in U6 snRNA + S-adenosyl-L-methionine = N(6)-methyladenosine in U6 snRNA + S-adenosyl-L-homocysteine + H(+). It catalyses the reaction an adenosine in mRNA + S-adenosyl-L-methionine = an N(6)-methyladenosine in mRNA + S-adenosyl-L-homocysteine + H(+). Methyltransferase activity is autoinhibited by the K-loop region that blocks S-adenosyl-L-methionine-binding. Upon activation, K-loop changes conformation, allowing S-adenosyl-L-methionine-binding and subsequent methyltransferase activity. mRNA N6-adenosine-methyltransferase activity is inhibited by zinc. Its function is as follows. RNA N6-methyltransferase that methylates adenosine residues at the N(6) position of a subset of RNAs and is involved in S-adenosyl-L-methionine homeostasis by regulating expression of MAT2A transcripts. Able to N6-methylate a subset of mRNAs and U6 small nuclear RNAs (U6 snRNAs). In contrast to the METTL3-METTL14 heterodimer, only able to methylate a limited number of RNAs: requires both a 5'UACAGAGAA-3' nonamer sequence and a specific RNA structure. Plays a key role in S-adenosyl-L-methionine homeostasis by mediating N6-methylation of MAT2A mRNAs, altering splicing of MAT2A transcripts: in presence of S-adenosyl-L-methionine, binds the 3'-UTR region of MAT2A mRNA and specifically N6-methylates the first hairpin of MAT2A mRNA, preventing recognition of their 3'-splice site by U2AF1/U2AF35, thereby inhibiting splicing and protein production of S-adenosylmethionine synthase. In S-adenosyl-L-methionine-limiting conditions, binds the 3'-UTR region of MAT2A mRNA but stalls due to the lack of a methyl donor, preventing N6-methylation and promoting expression of MAT2A. In addition to mRNAs, also able to mediate N6-methylation of U6 small nuclear RNA (U6 snRNA): specifically N6-methylates adenine in position 43 of U6 snRNAs. Also able to bind various lncRNAs, such as 7SK snRNA (7SK RNA) or 7SL RNA. Specifically binds the 3'-end of the MALAT1 long non-coding RNA. This Homo sapiens (Human) protein is RNA N(6)-adenosine-methyltransferase METTL16.